Here is a 397-residue protein sequence, read N- to C-terminus: Purine ribonucleoside efflux pump NepI (397 aa).

Residues 1–21 lie on the Cytoplasmic side of the membrane; it reads MNENIAEKFRADGVARPNWSA. The chain crosses the membrane as a helical span at residues 22-42; sequence VFAVAFCVACLITVEFLPVSL. At 43–54 the chain is on the periplasmic side; sequence LTPMAQDLGISE. A helical membrane pass occupies residues 55–75; it reads GVAGQSVTVTAFVAMFSSLFI. Topologically, residues 76–85 are cytoplasmic; the sequence is TQIIQATDRR. A helical membrane pass occupies residues 86–106; that stretch reads YIVILFAVLLTASCLMVSFAN. S107 is a topological domain (periplasmic). The chain crosses the membrane as a helical span at residues 108–128; sequence FTLLLLGRACLGLALGGFWAI. At 129–147 the chain is on the cytoplasmic side; it reads SASLTMRLVPARTVPKALS. The helical transmembrane segment at 148–168 threads the bilayer; it reads VIFGAVSIALVIAAPLGSFLG. Over 169–175 the chain is Periplasmic; sequence GIIGWRN. A helical membrane pass occupies residues 176 to 196; that stretch reads VFNAAAVMGVLCVIWVVKSLP. The Cytoplasmic portion of the chain corresponds to 197–215; sequence SLPGEPSHQKQNMFSLLQR. Residues 216–236 form a helical membrane-spanning segment; the sequence is PGVMAGMIAIFMSFAGQFAFF. The Periplasmic portion of the chain corresponds to 237 to 255; the sequence is TYIRPVYMNLAGFDVDGLT. Residues 256-276 traverse the membrane as a helical segment; it reads LVLLSFGIASFVGTSFSSYVL. Over 277 to 281 the chain is Cytoplasmic; it reads KRSVK. The chain crosses the membrane as a helical span at residues 282-302; that stretch reads LALAGAPLLLALSALTLIVWG. At 303–305 the chain is on the periplasmic side; it reads SDK. A helical transmembrane segment spans residues 306–326; the sequence is TVAAAIAIIWGLAFALVPVGW. The Cytoplasmic segment spans residues 327-343; that stretch reads STWITRSLADQAEKAGS. The helical transmembrane segment at 344 to 364 threads the bilayer; that stretch reads IQVAVIQLANTCGAAVGGYAL. At 365-366 the chain is on the periplasmic side; it reads DN. The helical transmembrane segment at 367-387 threads the bilayer; the sequence is FGLLSPLALSGGLMLLTALVV. The Cytoplasmic segment spans residues 388-397; that stretch reads AAKVRITPMS.

Belongs to the major facilitator superfamily. DHA1 family. NepI (TC 2.A.1.2.26) subfamily.

It is found in the cell inner membrane. The catalysed reaction is inosine(in) + H(+)(out) = inosine(out) + H(+)(in). It carries out the reaction guanosine(in) + H(+)(out) = guanosine(out) + H(+)(in). In terms of biological role, involved in the efflux of purine ribonucleosides, such as inosine and guanosine. This Salmonella paratyphi A (strain ATCC 9150 / SARB42) protein is Purine ribonucleoside efflux pump NepI.